The sequence spans 555 residues: Phosphomethylpyrimidine synthase (555 aa).

Substrate is bound by residues Asn-191, Met-220, Tyr-249, His-285, 305 to 307, 346 to 349, and Glu-385; these read SRG and DGLR. His-389 serves as a coordination point for Zn(2+). Residue Tyr-412 coordinates substrate. Residue His-453 coordinates Zn(2+). [4Fe-4S] cluster contacts are provided by Cys-533, Cys-536, and Cys-541.

Belongs to the ThiC family. As to quaternary structure, homodimer. It depends on [4Fe-4S] cluster as a cofactor.

The enzyme catalyses 5-amino-1-(5-phospho-beta-D-ribosyl)imidazole + S-adenosyl-L-methionine = 4-amino-2-methyl-5-(phosphooxymethyl)pyrimidine + CO + 5'-deoxyadenosine + formate + L-methionine + 3 H(+). The protein operates within cofactor biosynthesis; thiamine diphosphate biosynthesis. Functionally, catalyzes the synthesis of the hydroxymethylpyrimidine phosphate (HMP-P) moiety of thiamine from aminoimidazole ribotide (AIR) in a radical S-adenosyl-L-methionine (SAM)-dependent reaction. The sequence is that of Phosphomethylpyrimidine synthase from Ehrlichia ruminantium (strain Gardel).